Here is a 66-residue protein sequence, read N- to C-terminus: MKQGTVKWFNAEKGFGFIEVEGENDVFVHFSAINQDGYKSLEEGQSVEFEVVEGDRGPQAANVVKL.

Residues 1 to 66 (MKQGTVKWFN…GPQAANVVKL (66 aa)) form the CSD domain.

The protein localises to the cytoplasm. In terms of biological role, involved in cold stress response. This chain is Cold shock protein CspA (cspA), found in Staphylococcus haemolyticus (strain JCSC1435).